The chain runs to 128 residues: Small ribosomal subunit protein uS9 (128 aa).

Part of the 30S ribosomal subunit. Contacts proteins S7 and S10.

In terms of biological role, part of the top of the head of the 30S subunit. The C-terminal region penetrates the head emerging in the P-site where it contacts tRNA. The protein is Small ribosomal subunit protein uS9 (rpsI) of Thermus thermophilus (strain ATCC 27634 / DSM 579 / HB8).